The following is a 777-amino-acid chain: Lon protease (777 aa).

Residues Ile-11 to Ile-204 form the Lon N-terminal domain. Residue Gly-356–Thr-363 participates in ATP binding. Positions Leu-592–Asn-773 constitute a Lon proteolytic domain. Active-site residues include Ser-679 and Lys-722.

This sequence belongs to the peptidase S16 family. In terms of assembly, homohexamer. Organized in a ring with a central cavity.

It is found in the cytoplasm. The enzyme catalyses Hydrolysis of proteins in presence of ATP.. Its function is as follows. ATP-dependent serine protease that mediates the selective degradation of mutant and abnormal proteins as well as certain short-lived regulatory proteins. Required for cellular homeostasis and for survival from DNA damage and developmental changes induced by stress. Degrades polypeptides processively to yield small peptide fragments that are 5 to 10 amino acids long. Binds to DNA in a double-stranded, site-specific manner. This chain is Lon protease, found in Buchnera aphidicola subsp. Schizaphis graminum (strain Sg).